The sequence spans 149 residues: NADH-quinone oxidoreductase subunit A (149 aa).

The next 3 membrane-spanning stretches (helical) occupy residues 16-36 (FGIFLIVAIGLCCLMLVGAWF), 68-88 (FYLVAMFFVIFDVEALYLFAW), and 98-118 (LGFIEAAIFILVLLAGLVYLV).

Belongs to the complex I subunit 3 family. As to quaternary structure, NDH-1 is composed of 13 different subunits. Subunits NuoA, H, J, K, L, M, N constitute the membrane sector of the complex.

Its subcellular location is the cell inner membrane. The enzyme catalyses a quinone + NADH + 5 H(+)(in) = a quinol + NAD(+) + 4 H(+)(out). NDH-1 shuttles electrons from NADH, via FMN and iron-sulfur (Fe-S) centers, to quinones in the respiratory chain. The immediate electron acceptor for the enzyme in this species is believed to be ubiquinone. Couples the redox reaction to proton translocation (for every two electrons transferred, four hydrogen ions are translocated across the cytoplasmic membrane), and thus conserves the redox energy in a proton gradient. The polypeptide is NADH-quinone oxidoreductase subunit A (Cronobacter sakazakii (strain ATCC BAA-894) (Enterobacter sakazakii)).